The sequence spans 233 residues: 6-carboxyhexanoate--CoA ligase (233 aa).

Belongs to the BioW family. As to quaternary structure, homodimer. It depends on Mg(2+) as a cofactor.

The catalysed reaction is heptanedioate + ATP + CoA = 6-carboxyhexanoyl-CoA + AMP + diphosphate. Its pathway is metabolic intermediate metabolism; pimeloyl-CoA biosynthesis; pimeloyl-CoA from pimelate: step 1/1. Its function is as follows. Catalyzes the transformation of pimelate into pimeloyl-CoA with concomitant hydrolysis of ATP to AMP. In Methanocaldococcus sp. (strain FS406-22), this protein is 6-carboxyhexanoate--CoA ligase.